We begin with the raw amino-acid sequence, 285 residues long: Bifunctional protein FolD (285 aa).

NADP(+)-binding positions include 165 to 167 (GRS) and Ser-190.

It belongs to the tetrahydrofolate dehydrogenase/cyclohydrolase family. As to quaternary structure, homodimer.

It catalyses the reaction (6R)-5,10-methylene-5,6,7,8-tetrahydrofolate + NADP(+) = (6R)-5,10-methenyltetrahydrofolate + NADPH. It carries out the reaction (6R)-5,10-methenyltetrahydrofolate + H2O = (6R)-10-formyltetrahydrofolate + H(+). It functions in the pathway one-carbon metabolism; tetrahydrofolate interconversion. Catalyzes the oxidation of 5,10-methylenetetrahydrofolate to 5,10-methenyltetrahydrofolate and then the hydrolysis of 5,10-methenyltetrahydrofolate to 10-formyltetrahydrofolate. The chain is Bifunctional protein FolD from Burkholderia multivorans (strain ATCC 17616 / 249).